Consider the following 230-residue polypeptide: 5'-methylthioadenosine/S-adenosylhomocysteine nucleosidase (230 aa).

Catalysis depends on Glu12, which acts as the Proton acceptor. Substrate contacts are provided by residues Gly78, Ile153, and Met174–Glu175. Asp198 (proton donor) is an active-site residue.

The protein belongs to the PNP/UDP phosphorylase family. MtnN subfamily.

It catalyses the reaction S-adenosyl-L-homocysteine + H2O = S-(5-deoxy-D-ribos-5-yl)-L-homocysteine + adenine. The enzyme catalyses S-methyl-5'-thioadenosine + H2O = 5-(methylsulfanyl)-D-ribose + adenine. It carries out the reaction 5'-deoxyadenosine + H2O = 5-deoxy-D-ribose + adenine. It functions in the pathway amino-acid biosynthesis; L-methionine biosynthesis via salvage pathway; S-methyl-5-thio-alpha-D-ribose 1-phosphate from S-methyl-5'-thioadenosine (hydrolase route): step 1/2. Catalyzes the irreversible cleavage of the glycosidic bond in both 5'-methylthioadenosine (MTA) and S-adenosylhomocysteine (SAH/AdoHcy) to adenine and the corresponding thioribose, 5'-methylthioribose and S-ribosylhomocysteine, respectively. Also cleaves 5'-deoxyadenosine, a toxic by-product of radical S-adenosylmethionine (SAM) enzymes, into 5-deoxyribose and adenine. The chain is 5'-methylthioadenosine/S-adenosylhomocysteine nucleosidase from Shewanella sediminis (strain HAW-EB3).